The following is a 311-amino-acid chain: Small ribosomal subunit protein uS3 (311 aa).

The KH type-2 domain maps to 17–86 (MDEYFAEQLN…NPQIDAQEVK (70 aa)). Residues 190–267 (PDSYTTTEPS…EPQAEVAEDL (78 aa)) are disordered. Low complexity predominate over residues 194-204 (TTTEPSEPVTE). Basic and acidic residues predominate over residues 205–231 (PVEKPAEKPAAKPAEKPVEAPKKESAA). The span at 232-247 (KPKTPAVAPEKPVETA) shows a compositional bias: low complexity. The span at 248–267 (EVAEPEEAEEEPQAEVAEDL) shows a compositional bias: acidic residues.

Belongs to the universal ribosomal protein uS3 family. In terms of assembly, part of the 30S ribosomal subunit.

In terms of biological role, binds the lower part of the 30S subunit head. The chain is Small ribosomal subunit protein uS3 from Methanosarcina barkeri (strain Fusaro / DSM 804).